Consider the following 409-residue polypeptide: Na(+)/H(+) antiporter NhaA (409 aa).

The next 11 helical transmembrane spans lie at 13-33 (SGGILLMIATVAALLCQNTFL), 58-78 (LILWVNDGLMAVFFFLIGLEL), 93-113 (IALPAIGAAGGLIVPAVIFYL), 120-140 (FALGGWAIPTATDIAFALGIL), 153-173 (IFLMTLAIVDDLCAIVIIALF), 176-196 (SELSAQMLAVASVCLAALFAL), 216-236 (VAVLKSGVHATLAGVVAAFFI), 256-276 (LHGWVAFGVLPIFAFVNAGIS), 279-299 (GVGLDEILSPVALGTALGLFV), 326-346 (FIQLYGIAVLCGVGFTMSLFI), and 363-383 (LAILLGSVVSGAAGFILLKFS).

This sequence belongs to the NhaA Na(+)/H(+) (TC 2.A.33) antiporter family.

The protein localises to the cell inner membrane. The enzyme catalyses Na(+)(in) + 2 H(+)(out) = Na(+)(out) + 2 H(+)(in). Na(+)/H(+) antiporter that extrudes sodium in exchange for external protons. The protein is Na(+)/H(+) antiporter NhaA of Campylobacter concisus (strain 13826).